Here is a 130-residue protein sequence, read N- to C-terminus: Transcription antitermination protein NusB (130 aa).

Belongs to the NusB family.

Its function is as follows. Involved in transcription antitermination. Required for transcription of ribosomal RNA (rRNA) genes. Binds specifically to the boxA antiterminator sequence of the ribosomal RNA (rrn) operons. This Bacillus cereus (strain B4264) protein is Transcription antitermination protein NusB.